We begin with the raw amino-acid sequence, 193 residues long: Outer-membrane lipoprotein LolB (193 aa).

The first 21 residues, 1–21 (MRPARRFLAALACVAGALLSA), serve as a signal peptide directing secretion. Residue Cys-22 is the site of N-palmitoyl cysteine attachment. Cys-22 is lipidated: S-diacylglycerol cysteine.

The protein belongs to the LolB family. In terms of assembly, monomer.

It is found in the cell outer membrane. Plays a critical role in the incorporation of lipoproteins in the outer membrane after they are released by the LolA protein. This Azoarcus sp. (strain BH72) protein is Outer-membrane lipoprotein LolB.